Here is a 484-residue protein sequence, read N- to C-terminus: Protein DETOXIFICATION 33 (484 aa).

Positions 1–16 (MGKDKTLPLLDPREPP) are enriched in basic and acidic residues. Positions 1–22 (MGKDKTLPLLDPREPPELTGTK) are disordered. 12 helical membrane-spanning segments follow: residues 39–59 (LWEL…LGAL), 81–101 (VISG…ETLC), 122–142 (VILF…PPIL), 155–175 (AGKF…NFPI), 190–210 (WISG…ILYF), 218–238 (AITL…YILI), 267–287 (ALML…TGLL), 294–314 (VDAI…SIGF), 338–358 (VIVV…VVLA), 380–400 (IAVL…LSGV), 409–429 (LVAY…GLVL), and 439–459 (GIWG…IGII).

This sequence belongs to the multi antimicrobial extrusion (MATE) (TC 2.A.66.1) family.

Its subcellular location is the membrane. In Arabidopsis thaliana (Mouse-ear cress), this protein is Protein DETOXIFICATION 33.